The primary structure comprises 38 residues: Photosystem II reaction center protein L (38 aa).

A helical membrane pass occupies residues 17–37; the sequence is SLYWGLLLIFVLAILFSNYIF.

This sequence belongs to the PsbL family. As to quaternary structure, PSII is composed of 1 copy each of membrane proteins PsbA, PsbB, PsbC, PsbD, PsbE, PsbF, PsbH, PsbI, PsbJ, PsbK, PsbL, PsbM, PsbT, PsbX, PsbY, PsbZ, Psb30/Ycf12, at least 3 peripheral proteins of the oxygen-evolving complex and a large number of cofactors. It forms dimeric complexes.

The protein localises to the plastid. The protein resides in the chloroplast thylakoid membrane. Functionally, one of the components of the core complex of photosystem II (PSII). PSII is a light-driven water:plastoquinone oxidoreductase that uses light energy to abstract electrons from H(2)O, generating O(2) and a proton gradient subsequently used for ATP formation. It consists of a core antenna complex that captures photons, and an electron transfer chain that converts photonic excitation into a charge separation. This subunit is found at the monomer-monomer interface and is required for correct PSII assembly and/or dimerization. The sequence is that of Photosystem II reaction center protein L from Chlorokybus atmophyticus (Soil alga).